A 325-amino-acid chain; its full sequence is Porphobilinogen deaminase (325 aa).

C253 carries the post-translational modification S-(dipyrrolylmethanemethyl)cysteine.

Belongs to the HMBS family. Requires dipyrromethane as cofactor.

The enzyme catalyses 4 porphobilinogen + H2O = hydroxymethylbilane + 4 NH4(+). The protein operates within porphyrin-containing compound metabolism; protoporphyrin-IX biosynthesis; coproporphyrinogen-III from 5-aminolevulinate: step 2/4. Its function is as follows. Tetrapolymerization of the monopyrrole PBG into the hydroxymethylbilane pre-uroporphyrinogen in several discrete steps. This is Porphobilinogen deaminase (hemC) from Dictyostelium discoideum (Social amoeba).